Reading from the N-terminus, the 60-residue chain is uncharacterized protein (60 aa).

Positions 1 to 21 (MNKLLKLFFITIIIYNNIAFA) are cleaved as a signal peptide.

This is an uncharacterized protein from Rickettsia prowazekii (strain Madrid E).